Consider the following 567-residue polypeptide: Potassium-transporting ATPase potassium-binding subunit (567 aa).

The next 12 membrane-spanning stretches (helical) occupy residues 11–31, 67–87, 136–156, 179–199, 255–275, 286–306, 333–353, 363–383, 385–405, 422–442, 489–509, and 532–552; these read LYLL…AALL, AAAI…LQRW, GLAV…VALV, LWLL…QGVV, FSNW…VVMF, VVLL…VYLA, FGVL…CGAV, LGGG…GGVG, GLYG…LMIG, LVSV…AIAV, LMLA…VLAL, and LFVV…YIPA.

This sequence belongs to the KdpA family. As to quaternary structure, the system is composed of three essential subunits: KdpA, KdpB and KdpC.

It is found in the cell inner membrane. Its function is as follows. Part of the high-affinity ATP-driven potassium transport (or Kdp) system, which catalyzes the hydrolysis of ATP coupled with the electrogenic transport of potassium into the cytoplasm. This subunit binds the periplasmic potassium ions and delivers the ions to the membrane domain of KdpB through an intramembrane tunnel. This Laribacter hongkongensis (strain HLHK9) protein is Potassium-transporting ATPase potassium-binding subunit.